A 230-amino-acid chain; its full sequence is Ethylene-responsive transcription factor ERF012 (230 aa).

Residues 1 to 17 show a composition bias toward basic and acidic residues; the sequence is MVKQERKIQTSSTKKEM. The disordered stretch occupies residues 1–51; sequence MVKQERKIQTSSTKKEMPLSSSPSSSSSSSSSSSSSSCKNKNKKSKIKKYK. A compositionally biased stretch (low complexity) spans 20-39; sequence SSSPSSSSSSSSSSSSSSCK. Residues 40-51 show a composition bias toward basic residues; that stretch reads NKNKKSKIKKYK. The segment at residues 49 to 106 is a DNA-binding region (AP2/ERF); sequence KYKGVRMRSWGSWVSEIRAPNQKTRIWLGSYSTAEAAARAYDVALLCLKGPQANLNFP.

The protein belongs to the AP2/ERF transcription factor family. ERF subfamily. Expressed cotyledons, ovules and seeds of immature siliques.

It is found in the nucleus. In terms of biological role, transcriptional activator involved in the regulation of plant development and tolerance to abiotic stresses. Involved in salt and osmotic stress response pathways. May be regulated by the stress-related genes RD29A, RD22, DREB1A or P5CS during stress response. Binds to the GCC-box pathogenesis-related promoter element. May be involved in the regulation of gene expression by stress factors and by components of stress signal transduction pathways. The polypeptide is Ethylene-responsive transcription factor ERF012 (ERF012) (Arabidopsis thaliana (Mouse-ear cress)).